Consider the following 833-residue polypeptide: DNA gyrase subunit A (833 aa).

Residues 34-500 (LPDVRDGLKP…AGDVRDIEDI (467 aa)) form the Topo IIA-type catalytic domain. Catalysis depends on Y122, which acts as the O-(5'-phospho-DNA)-tyrosine intermediate. Positions 527–533 (QKRGGQG) match the GyrA-box motif.

Belongs to the type II topoisomerase GyrA/ParC subunit family. As to quaternary structure, heterotetramer, composed of two GyrA and two GyrB chains. In the heterotetramer, GyrA contains the active site tyrosine that forms a transient covalent intermediate with DNA, while GyrB binds cofactors and catalyzes ATP hydrolysis.

The protein localises to the cytoplasm. The catalysed reaction is ATP-dependent breakage, passage and rejoining of double-stranded DNA.. Its function is as follows. A type II topoisomerase that negatively supercoils closed circular double-stranded (ds) DNA in an ATP-dependent manner to modulate DNA topology and maintain chromosomes in an underwound state. Negative supercoiling favors strand separation, and DNA replication, transcription, recombination and repair, all of which involve strand separation. Also able to catalyze the interconversion of other topological isomers of dsDNA rings, including catenanes and knotted rings. Type II topoisomerases break and join 2 DNA strands simultaneously in an ATP-dependent manner. This Chlamydia muridarum (strain MoPn / Nigg) protein is DNA gyrase subunit A.